Consider the following 256-residue polypeptide: Homeobox protein goosecoid (256 aa).

The homeobox DNA-binding region spans 160–219 (KRRHRTIFTDEQLEALENLFQETKYPDVGTREQLARKVHLREEKVEVWFKNRRAKWRRQK). The disordered stretch occupies residues 213–256 (AKWRRQKRSSSEESENAEKWNKTSSKASPEKREEEGKSDLDSDS). A compositionally biased stretch (basic and acidic residues) spans 240–256 (SPEKREEEGKSDLDSDS).

The protein belongs to the paired homeobox family. Bicoid subfamily. As to expression, in early gastrulation, expressed in the dorsal lip. In later stages of development found in head, limbs and body wall. In the embryo, expressed in the postotic cranial neural crest cells, the frontonasal prominence, the first branchial arch and cleft, and specific regions of large joints.

It is found in the nucleus. In terms of biological role, regulates chordin (CHRD). May play a role in spatial programing within discrete embryonic fields or lineage compartments during organogenesis. In concert with NKX3-2, plays a role in defining the structural components of the middle ear; required for the development of the entire tympanic ring. Goosecoid-expressing regions of the gastrulating mouse egg cylinder have organizer-like activity when transplanted into Xenopus embryos. Probably involved in the regulatory networks that define neural crest cell fate specification and determine mesoderm cell lineages in mammals. The polypeptide is Homeobox protein goosecoid (Gsc) (Mus musculus (Mouse)).